The primary structure comprises 208 residues: Ribosomal RNA large subunit methyltransferase E (208 aa).

S-adenosyl-L-methionine contacts are provided by Gly-62, Trp-64, Asp-82, Asp-98, and Asp-123. The Proton acceptor role is filled by Lys-163.

Belongs to the class I-like SAM-binding methyltransferase superfamily. RNA methyltransferase RlmE family.

The protein resides in the cytoplasm. It catalyses the reaction uridine(2552) in 23S rRNA + S-adenosyl-L-methionine = 2'-O-methyluridine(2552) in 23S rRNA + S-adenosyl-L-homocysteine + H(+). In terms of biological role, specifically methylates the uridine in position 2552 of 23S rRNA at the 2'-O position of the ribose in the fully assembled 50S ribosomal subunit. In Glaesserella parasuis serovar 5 (strain SH0165) (Haemophilus parasuis), this protein is Ribosomal RNA large subunit methyltransferase E.